Consider the following 211-residue polypeptide: Putative F-box protein At1g52490 (211 aa).

An F-box domain is found at 12 to 59; that stretch reads EEEYLQLPLDLIVEILKKLPLKSLVRFRCVSKQFSTIICSLRDFIESV.

The sequence is that of Putative F-box protein At1g52490 from Arabidopsis thaliana (Mouse-ear cress).